A 134-amino-acid polypeptide reads, in one-letter code: STAG3-like protein 3 (134 aa).

One can recognise an SCD domain in the interval 10 to 95 (PKVTCRDVLP…GCFKDWMVSM (86 aa)).

The protein belongs to the SCC3 family.

It is found in the nucleus. In Homo sapiens (Human), this protein is STAG3-like protein 3 (STAG3L3).